The sequence spans 184 residues: MTVPLYADAREAIACKTRFVPDFPVPGVIFEDLTPVLADAAAFSLIVDELAKNAMRLGADFIGGLDARGFLLGSAVAYKAGTGILAIRKKGKLPPPVHSEEYSLEYGTAALELPAEGLELEDKKVVLVDDVLATGGTLDAARKLIEACGATVSGYAVVLEVDGLGGRERLNDAPLVVINESATA.

This sequence belongs to the purine/pyrimidine phosphoribosyltransferase family. In terms of assembly, homodimer.

It localises to the cytoplasm. It carries out the reaction AMP + diphosphate = 5-phospho-alpha-D-ribose 1-diphosphate + adenine. It functions in the pathway purine metabolism; AMP biosynthesis via salvage pathway; AMP from adenine: step 1/1. In terms of biological role, catalyzes a salvage reaction resulting in the formation of AMP, that is energically less costly than de novo synthesis. This Corynebacterium diphtheriae (strain ATCC 700971 / NCTC 13129 / Biotype gravis) protein is Adenine phosphoribosyltransferase.